Here is a 489-residue protein sequence, read N- to C-terminus: Long chain base biosynthesis protein 2a (489 aa).

Residues 2–22 (ITIPYLTAVSTYFSYGLLFAF) form a helical membrane-spanning segment. K311 carries the post-translational modification N6-(pyridoxal phosphate)lysine.

It belongs to the class-II pyridoxal-phosphate-dependent aminotransferase family. In terms of assembly, heterodimer with LCB1. Component of the serine palmitoyltransferase (SPT) complex, composed of LCB1 and LCB2 (LCB2a or LCB2b). Requires pyridoxal 5'-phosphate as cofactor. As to expression, ubiquitous. Detected in leaves, roots, stems, flowers and at a lower level in mature seeds.

The protein localises to the endoplasmic reticulum membrane. The catalysed reaction is L-serine + hexadecanoyl-CoA + H(+) = 3-oxosphinganine + CO2 + CoA. The protein operates within lipid metabolism; sphingolipid metabolism. Serine palmitoyltransferase (SPT). The heterodimer formed with LCB1 constitutes the catalytic core. Involved in the regulation of the programmed cell death (PCD) signaling pathway. Plays an important role during male gametogenesis and embryogenesis. This Arabidopsis thaliana (Mouse-ear cress) protein is Long chain base biosynthesis protein 2a (LCB2a).